Here is a 734-residue protein sequence, read N- to C-terminus: Myb-like protein J (734 aa).

Disordered regions lie at residues 1–35 (MPNN…FKSN), 128–196 (QKDQ…PTMM), and 221–378 (SPIS…LKQG). Residues 131-142 (QQQKEQQKEQQK) show a composition bias toward basic and acidic residues. The segment covering 164 to 173 (TTTTTTTTTT) has biased composition (low complexity). Over residues 174 to 196 (AVEQQGAEQQDTNLNSTSSPTMM) the composition is skewed to polar residues. A compositionally biased stretch (low complexity) spans 221 to 230 (SPISSSLNNS). Positions 231–257 (QDNTKPVSPDNIENTSNPMDTSSSNGK) are enriched in polar residues. Over residues 258–372 (TPTITPIVTP…GGKTNPTGKK (115 aa)) the composition is skewed to low complexity. The HTH myb-type domain maps to 371–426 (KKTSLKQGWTKEEHIRFLNGIQIHGKGAWKEIAQFVGTRTPTQIQSHAQKYYLRQK). Positions 399-422 (WKEIAQFVGTRTPTQIQSHAQKYY) form a DNA-binding region, H-T-H motif. Residues 445–454 (DDNLNNSNKN) are compositionally biased toward low complexity. A disordered region spans residues 445-623 (DDNLNNSNKN…GNILRHQNSH (179 aa)). Basic and acidic residues predominate over residues 455 to 468 (NVDKNKQDDKEKKT). Basic residues predominate over residues 469 to 478 (QKTKKTKSKS). Composition is skewed to low complexity over residues 489 to 543 (QQQQ…SSQT) and 574 to 615 (NNNN…NEGN).

The protein resides in the nucleus. The polypeptide is Myb-like protein J (mybJ) (Dictyostelium discoideum (Social amoeba)).